The primary structure comprises 199 residues: MKHPSLIFLTGFSGSGKSTIGPLLANSLGYDFLDLDKEIERQADKPITRIFAEEGEDHFRERERAMLESIVGRKELVVSLGGGALQNNDCFSLIISSGTMVYLHSSPLILAKRMSHKTDRPLMKGENGERLSSEEIEKKILALLEHREPRYKTAQIMVETDTKRIGTTVEELTRKIERYVRRAEKNQNSHSQTKKQSRK.

14–19 (GSGKST) serves as a coordination point for ATP. Ser-18 contacts Mg(2+). Substrate contacts are provided by Asp-36, Arg-60, and Gly-82. Arg-120 is an ATP binding site. Arg-147 is a substrate binding site. Residues 179–199 (YVRRAEKNQNSHSQTKKQSRK) form a disordered region.

It belongs to the shikimate kinase family. Monomer. Mg(2+) is required as a cofactor.

The protein localises to the cytoplasm. It catalyses the reaction shikimate + ATP = 3-phosphoshikimate + ADP + H(+). It functions in the pathway metabolic intermediate biosynthesis; chorismate biosynthesis; chorismate from D-erythrose 4-phosphate and phosphoenolpyruvate: step 5/7. In terms of biological role, catalyzes the specific phosphorylation of the 3-hydroxyl group of shikimic acid using ATP as a cosubstrate. This Chlorobium phaeobacteroides (strain BS1) protein is Shikimate kinase.